Consider the following 72-residue polypeptide: UPF0270 protein KPK_0377 (72 aa).

It belongs to the UPF0270 family.

The polypeptide is UPF0270 protein KPK_0377 (Klebsiella pneumoniae (strain 342)).